A 411-amino-acid polypeptide reads, in one-letter code: MAKEYFWGATLSKDKKIFKWDPESDFLDDEDDDEEDSISHFLFLKQAVLGVNAKDDDRNVIEVETINFDGETVIQPLLSLRLGLNESTNLDIGLQPPVTFKLALGSGPVYLSGQHALDLQEDEEFGKDFEGAEAYEVGDEDLEDEDEGEEDEEEEETPKKGSPKRIVKKIAAVKGRMKGKGDELDEDEDDDEEEEEEEEEIQTAKGKKRPAPSAKGPAKKLAKVDKDGTSKRKVPNGSVENGHAIDDDEDDEEDEDYKVGDEEEEEEATSGEEEEEDEEEEEEEDDEEMALGDDDDEDDDEEDDEDEEGMDDEDEEEEEDSSPVKPAKKAKGKVNGTAKPKGTPKSQANKGMKEKKTYSLEDMKQDLIKSPSKPKKEEKFKNFVKSKFHLSEGKKIQELWGWYKSTQLTAK.

Composition is skewed to acidic residues over residues 134-156 (AYEVGDEDLEDEDEGEEDEEEEE), 183-201 (ELDEDEDDDEEEEEEEEEI), and 246-321 (DDDE…EEDS). A disordered region spans residues 134–378 (AYEVGDEDLE…KSPSKPKKEE (245 aa)). Positions 351 to 367 (GMKEKKTYSLEDMKQDL) are enriched in basic and acidic residues.

This sequence belongs to the nucleoplasmin family. Post-translationally, phosphorylated by CaM-kinase II in vitro.

It localises to the nucleus. Functionally, required for mitotic progression. Binds to chromatin. The polypeptide is Mitotic apparatus protein p62 (Lytechinus pictus (Painted sea urchin)).